The sequence spans 365 residues: F-box protein At1g48060 (365 aa).

Positions 1-20 (MKPQEEEEKNENMARKRSKS) are disordered. Residues 20–69 (SSSSLSIPLDIATDIFLRLPAKSVVRFSCVAKHWSSITTAPYFTNSFETR) form the F-box domain.

The chain is F-box protein At1g48060 from Arabidopsis thaliana (Mouse-ear cress).